A 128-amino-acid polypeptide reads, in one-letter code: Large ribosomal subunit protein bL19 (128 aa).

It belongs to the bacterial ribosomal protein bL19 family.

Its function is as follows. This protein is located at the 30S-50S ribosomal subunit interface and may play a role in the structure and function of the aminoacyl-tRNA binding site. This is Large ribosomal subunit protein bL19 from Bradyrhizobium sp. (strain ORS 278).